The sequence spans 221 residues: Ribosomal RNA large subunit methyltransferase E (221 aa).

S-adenosyl-L-methionine-binding residues include G60, W62, D89, D105, and D134. K174 acts as the Proton acceptor in catalysis. Residues 199–221 (KPKASRDKSSETFLLGRQLKHPG) are disordered.

This sequence belongs to the class I-like SAM-binding methyltransferase superfamily. RNA methyltransferase RlmE family.

It localises to the cytoplasm. The enzyme catalyses uridine(2552) in 23S rRNA + S-adenosyl-L-methionine = 2'-O-methyluridine(2552) in 23S rRNA + S-adenosyl-L-homocysteine + H(+). In terms of biological role, specifically methylates the uridine in position 2552 of 23S rRNA at the 2'-O position of the ribose in the fully assembled 50S ribosomal subunit. This is Ribosomal RNA large subunit methyltransferase E from Ralstonia nicotianae (strain ATCC BAA-1114 / GMI1000) (Ralstonia solanacearum).